A 669-amino-acid chain; its full sequence is NADH-ubiquinone oxidoreductase chain 5 (669 aa).

A run of 15 helical transmembrane segments spans residues 3–23 (LLIVILPLIGSFAAGFFGRFL), 50–70 (VALCASACYIKIAPWIFSELF), 81–100 (LTVILLLVVTIVSSLVHIYS), 119–139 (IFTFFMLMLVTGDNFIQLFLG), 178–198 (LALGIMGCFTIFQTVDFSTIF), 211–231 (FLFCNMGFHAITVICILVFIG), 253–273 (TPVSALIHAATMVTAGVFMIA), 286–306 (LIVITFVGAMTSFFAATTGIL), 322–342 (LGYMIFACGISNYSVSVFHLM), 377–397 (LLPFTYAMMLIGSLSLIGFPF), 423–443 (FWLGSVSVFFTSYYSFRLLFL), 464–484 (ILMAIPLILLAFGSIFVGYLA), 522–542 (LIPILFSTLGSFVAYSVNFVV), 628–648 (AFVMLLGLTIFISVIGLWDFI), and 649–669 (SFWVDNRLYFIYIVSFLFINI).

It belongs to the complex I subunit 5 family.

The protein localises to the mitochondrion inner membrane. The enzyme catalyses a ubiquinone + NADH + 5 H(+)(in) = a ubiquinol + NAD(+) + 4 H(+)(out). Core subunit of the mitochondrial membrane respiratory chain NADH dehydrogenase (Complex I) that is believed to belong to the minimal assembly required for catalysis. Complex I functions in the transfer of electrons from NADH to the respiratory chain. The immediate electron acceptor for the enzyme is believed to be ubiquinone. The polypeptide is NADH-ubiquinone oxidoreductase chain 5 (ND5) (Marchantia polymorpha (Common liverwort)).